The sequence spans 178 residues: Transcription factor E (178 aa).

Residues 5 to 89 (AEELILSLAK…YWKVNIDQIN (85 aa)) form the HTH TFE/IIEalpha-type domain.

The protein belongs to the TFE family. Monomer. Interaction with RNA polymerase subunits RpoF and RpoE is necessary for Tfe stimulatory transcription activity. Able to interact with Tbp and RNA polymerase in the absence of DNA promoter. Interacts both with the preinitiation and elongation complexes.

Functionally, transcription factor that plays a role in the activation of archaeal genes transcribed by RNA polymerase. Facilitates transcription initiation by enhancing TATA-box recognition by TATA-box-binding protein (Tbp), and transcription factor B (Tfb) and RNA polymerase recruitment. Not absolutely required for transcription in vitro, but particularly important in cases where Tbp or Tfb function is not optimal. It dynamically alters the nucleic acid-binding properties of RNA polymerases by stabilizing the initiation complex and destabilizing elongation complexes. Seems to translocate with the RNA polymerase following initiation and acts by binding to the non template strand of the transcription bubble in elongation complexes. The sequence is that of Transcription factor E from Sulfurisphaera tokodaii (strain DSM 16993 / JCM 10545 / NBRC 100140 / 7) (Sulfolobus tokodaii).